We begin with the raw amino-acid sequence, 373 residues long: Alcohol dehydrogenase 2 (373 aa).

The Zn(2+) site is built by C47, T49, H69, C99, C102, C105, C113, and C177. An alcohol-binding residues include T49 and H69. T49 is a binding site for NAD(+). NAD(+) is bound by residues 202-207, D226, K231, T272, F316, and R366; that span reads GLGAVG.

Belongs to the zinc-containing alcohol dehydrogenase family. Homodimer. Zn(2+) is required as a cofactor.

It is found in the cytoplasm. It carries out the reaction a primary alcohol + NAD(+) = an aldehyde + NADH + H(+). The catalysed reaction is a secondary alcohol + NAD(+) = a ketone + NADH + H(+). This chain is Alcohol dehydrogenase 2 (ADH2), found in Hordeum vulgare (Barley).